The sequence spans 546 residues: Glucose-6-phosphate isomerase (546 aa).

Catalysis depends on E357, which acts as the Proton donor. Active-site residues include H389 and K509.

Belongs to the GPI family.

It is found in the cytoplasm. The catalysed reaction is alpha-D-glucose 6-phosphate = beta-D-fructose 6-phosphate. It functions in the pathway carbohydrate biosynthesis; gluconeogenesis. The protein operates within carbohydrate degradation; glycolysis; D-glyceraldehyde 3-phosphate and glycerone phosphate from D-glucose: step 2/4. Its function is as follows. Catalyzes the reversible isomerization of glucose-6-phosphate to fructose-6-phosphate. This is Glucose-6-phosphate isomerase from Anaeromyxobacter dehalogenans (strain 2CP-1 / ATCC BAA-258).